A 150-amino-acid polypeptide reads, in one-letter code: Monooxygenase dmxR10 (150 aa).

Belongs to the avfA family.

Its pathway is secondary metabolite biosynthesis. Its function is as follows. Monooxygenase; part of the gene cluster that mediates the biosynthesis of the dimeric xanthones cryptosporioptides. The pathway begins with the synthesis of atrochrysone thioester by the polyketide synthase dmx-nrPKS. The atrochrysone carboxyl ACP thioesterase dmxR1 then breaks the thioester bond and releases the atrochrysone carboxylic acid from dmx-nrPKS. Atrochrysone carboxylic acid is decarboxylated by the decarboxylase dmxR15, and oxidized by the anthrone oxygenase dmxR16 to yield emodin. Emodin is then reduced to emodin hydroquinone by the oxidoreductase dmxR7. A-ring reduction by the short chain dehydrogenase dmxR18, dehydration by the scytalone dehydratase-like protein dmxR17 and probable spontaneous re-oxidation, results in overall deoxygenation to chrysophanol. Baeyer-Villiger oxidation by the Baeyer-Villiger monooxygenase (BVMO) dmxR6 then yields monodictylactone in equilibrium with monodictyphenone. In the case of the cryptosporioptides biosynthesis, monodictylactone is reduced at C-12 to an alcohol (by the short chain dehydrogenases dmxR12 or dmxR8) and hydroxylated at C-5 by dmxR9, yielding the electron-rich aromatic which could eliminate H(2)O to form the ortho-quinonemethide, followed by tautomerisation to paraquinone and complete the formal reduction to produce the 10-methylgroup. Conjugate addition of C-4a-OH to the resulting paraquinone by the monooxygenase dmxR10 then gives cyclohexadienone, which is then reduced at C-5 by the short chain dehydrogenase dmxR3 to give the dihydroxanthone. The 6,7-epoxide in the cryptosporioptides could be introduced by the cytochrome P450 monooxygenase dmxL3. The highly reducing PKS dmxL2 manufactures butyrate, which is further carboxylated by dmxL1 to form ethylmalonate. It is not yet clear whether the carboxylation occurs while the butyrate is attached to the ACP of dmxL2, but this unusual fungal metabolite could then be esterified to O-5 by the O-acetyltransferase dmxR13. Finally, dimerization performed by dmxR5 gives the observed dimers cryptosporioptides A, B and C as the final products of the pathway. This chain is Monooxygenase dmxR10, found in Cryptosporiopsis sp. (strain 8999).